Consider the following 346-residue polypeptide: MVQPRFVRPTQSSPSSISGEPNSSNLYVANCGPAVGLTHNAIAAVFAEFGEVNGVYAADDSGVRVIVSFADPFSAKAALEALSGRPCPDLKGRSLHIRYSVLQLPSETQVNDCVPVSLIDSELNIPGLFLLPDFVTVAEEQQLLAAVDARHWIGLAKRRVQHYGYEFCYGTRNVDTKKRLGELPSFVSPILERIYLFPNFDNGSASLNLDQLTVNEYPSGVGLSPHIDTHSAFEDCIFSLSLAGPCIMEFRRYSVSTWKASTTDAEKSGDSSCIKKALYLPPRSMLLLSGEARYAWNHYIPHHKIDKVKDKVIRRSSRRVSFTLRKVRNHPCSCKYPQYCDSQQQM.

The interval 1–21 (MVQPRFVRPTQSSPSSISGEP) is disordered. Low complexity predominate over residues 12–21 (SSPSSISGEP). An RRM domain is found at 24 to 102 (SNLYVANCGP…RSLHIRYSVL (79 aa)). The Fe2OG dioxygenase domain maps to 208–328 (NLDQLTVNEY…RVSFTLRKVR (121 aa)). Fe cation contacts are provided by H226, D228, and H298. The 2-oxoglutarate site is built by R319 and R325.

Belongs to the alkB family. It depends on Fe(2+) as a cofactor.

Functionally, binds tRNA and catalyzes the iron and alpha-ketoglutarate dependent hydroxylation of 5-methylcarboxymethyl uridine at the wobble position of the anticodon loop in tRNA via its dioxygenase domain, giving rise to 5-(S)-methoxycarbonylhydroxymethyluridine. The sequence is that of Alkylated DNA repair protein ALKBH8 homolog from Arabidopsis thaliana (Mouse-ear cress).